The primary structure comprises 370 residues: GTPase Obg (370 aa).

The region spanning 1 to 159 is the Obg domain; sequence MKFIDEARIE…RMLKLELKVL (159 aa). The tract at residues 128–147 is disordered; that stretch reads LHFKSSTNRAPRQKTDGKPG. Positions 160–334 constitute an OBG-type G domain; sequence ADVGLLGMPN…LCYAIYDYLS (175 aa). GTP contacts are provided by residues 166 to 173, 191 to 195, 213 to 216, 284 to 287, and 315 to 317; these read GMPNAGKS, FTTLA, DIPG, NKLD, and SAL. The Mg(2+) site is built by Ser-173 and Thr-193.

Belongs to the TRAFAC class OBG-HflX-like GTPase superfamily. OBG GTPase family. Monomer. Requires Mg(2+) as cofactor.

The protein localises to the cytoplasm. Its function is as follows. An essential GTPase which binds GTP, GDP and possibly (p)ppGpp with moderate affinity, with high nucleotide exchange rates and a fairly low GTP hydrolysis rate. Plays a role in control of the cell cycle, stress response, ribosome biogenesis and in those bacteria that undergo differentiation, in morphogenesis control. The sequence is that of GTPase Obg from Burkholderia cenocepacia (strain ATCC BAA-245 / DSM 16553 / LMG 16656 / NCTC 13227 / J2315 / CF5610) (Burkholderia cepacia (strain J2315)).